The following is a 331-amino-acid chain: Neuropeptides B/W receptor type 1 (331 aa).

Topologically, residues 1 to 43 (MHNASYWGPERANTSCPAPAPTLGCPNASGPAPPLPPPLAVAV) are extracellular. 3 N-linked (GlcNAc...) asparagine glycosylation sites follow: Asn-3, Asn-13, and Asn-27. Residues 44–66 (PVVYAVICAVGLAGNSAVLFVLL) traverse the membrane as a helical segment. The Cytoplasmic portion of the chain corresponds to 67–75 (RAPRRKTVT). Residues 76-100 (NLFILNLAVADELFTLVPPVNIADF) traverse the membrane as a helical segment. The Extracellular segment spans residues 101–115 (LLRRWPFGELLCKLV). An intrachain disulfide couples Cys-112 to Cys-191. Residues 116–135 (VAVDQYNTFSSLYFLTVMSA) form a helical membrane-spanning segment. The Cytoplasmic segment spans residues 136 to 160 (DRYLVVLATAESRRVAGRTYGAARA). Residues 161 to 180 (VSLAVWGVATLVVLPFAVFA) traverse the membrane as a helical segment. At 181–205 (RLDEEQGRRQCVLVFPQPEALWWRA) the chain is on the extracellular side. A helical membrane pass occupies residues 206 to 227 (SRLYTLVLGFAIPVSTICVLYT). Topologically, residues 228-251 (SLLCRLRAIRLDSHAKALDRAKKR) are cytoplasmic. A helical transmembrane segment spans residues 252–276 (VTVLVVAILAVCLLVWTPYHLSTVV). Residues 277 to 286 (ALTTDLPQTP) lie on the Extracellular side of the membrane. Residues 287–301 (LVIAVSYFITSLSYA) form a helical membrane-spanning segment. Residues 302-331 (NSCLNPFLYAFLDDSFRRSLRQLLACRTTS) lie on the Cytoplasmic side of the membrane.

The protein belongs to the G-protein coupled receptor 1 family.

It is found in the cell membrane. Interacts specifically with a number of opioid ligands. Receptor for neuropeptides B and W, which may be involved in neuroendocrine system regulation, food intake and the organization of other signals. This is Neuropeptides B/W receptor type 1 (NPBWR1) from Bos taurus (Bovine).